Consider the following 301-residue polypeptide: Ras-related GTP-binding protein A (301 aa).

GTP is bound by residues 9–16 (GRSESGKT), 57–61 (DCGGQ), and 122–125 (HKMD).

It belongs to the GTR/RAG GTP-binding protein family.

It is found in the cytoplasm. The protein resides in the nucleus. It localises to the lysosome. Its function is as follows. Guanine nucleotide-binding protein that plays a crucial role in the cellular response to amino acid availability through regulation of the TOR signaling cascade. The chain is Ras-related GTP-binding protein A (ragA) from Dictyostelium discoideum (Social amoeba).